The sequence spans 90 residues: Hypnin-A3 (90 aa).

Lectin specific for core(alpha 1-6)fucosylated N-glycans. Inhibits platelet aggregation. This chain is Hypnin-A3, found in Hypnea japonica (Japanese red alga).